A 153-amino-acid chain; its full sequence is Xanthine-guanine phosphoribosyltransferase (153 aa).

5-phospho-alpha-D-ribose 1-diphosphate-binding positions include 37–38, Arg69, and 88–96; these read RG and DDLVDTGGT. Arg69 is a binding site for GMP. Asp89 contributes to the Mg(2+) binding site. Guanine contacts are provided by Asp92 and Ile135. The xanthine site is built by Asp92 and Ile135. Residues 92–96 and 134–135 each bind GMP; these read DTGGT and WI.

It belongs to the purine/pyrimidine phosphoribosyltransferase family. XGPT subfamily. In terms of assembly, homotetramer. The cofactor is Mg(2+).

It localises to the cell inner membrane. The enzyme catalyses GMP + diphosphate = guanine + 5-phospho-alpha-D-ribose 1-diphosphate. The catalysed reaction is XMP + diphosphate = xanthine + 5-phospho-alpha-D-ribose 1-diphosphate. It carries out the reaction IMP + diphosphate = hypoxanthine + 5-phospho-alpha-D-ribose 1-diphosphate. Its pathway is purine metabolism; GMP biosynthesis via salvage pathway; GMP from guanine: step 1/1. The protein operates within purine metabolism; XMP biosynthesis via salvage pathway; XMP from xanthine: step 1/1. In terms of biological role, purine salvage pathway enzyme that catalyzes the transfer of the ribosyl-5-phosphate group from 5-phospho-alpha-D-ribose 1-diphosphate (PRPP) to the N9 position of the 6-oxopurines guanine and xanthine to form the corresponding ribonucleotides GMP (guanosine 5'-monophosphate) and XMP (xanthosine 5'-monophosphate), with the release of PPi. To a lesser extent, also acts on hypoxanthine. The protein is Xanthine-guanine phosphoribosyltransferase of Proteus mirabilis (strain HI4320).